The following is a 480-amino-acid chain: Ochratoxinase (480 aa).

The Zn(2+) site is built by His-111, His-113, Lys-246, His-287, and His-307. Residue Lys-246 is part of the active site. Asp-378 is an active-site residue.

This sequence belongs to the metallo-dependent hydrolases superfamily. Ochratoxinase amidase 2 family. In terms of assembly, homooctamer. Requires Zn(2+) as cofactor.

It localises to the secreted. The enzyme catalyses ochratoxin A + H2O = ochratoxin alpha + L-phenylalanine. Its activity is regulated as follows. The Zn(2+)-specific chelator 1,10-phenanthroline inhibits the enzyme activity. Carboxypeptidase that catalyzes the release of a C-terminal amino acid with specific catalytic activity for aromatic amino acids such as phenylalanine. Is able to degrade ochratoxin A, one of the five major mycotoxins most harmful to humans and animals that is produced by Aspergillus and Penicillium species and occurs in a wide range of agricultural products. This chain is Ochratoxinase, found in Aspergillus niger (strain ATCC 1015 / CBS 113.46 / FGSC A1144 / LSHB Ac4 / NCTC 3858a / NRRL 328 / USDA 3528.7).